Here is a 449-residue protein sequence, read N- to C-terminus: Exodeoxyribonuclease 7 large subunit (449 aa).

This sequence belongs to the XseA family. As to quaternary structure, heterooligomer composed of large and small subunits.

The protein resides in the cytoplasm. It carries out the reaction Exonucleolytic cleavage in either 5'- to 3'- or 3'- to 5'-direction to yield nucleoside 5'-phosphates.. In terms of biological role, bidirectionally degrades single-stranded DNA into large acid-insoluble oligonucleotides, which are then degraded further into small acid-soluble oligonucleotides. This is Exodeoxyribonuclease 7 large subunit from Lacticaseibacillus casei (strain BL23) (Lactobacillus casei).